A 1488-amino-acid polypeptide reads, in one-letter code: Chromosome partition protein MukB (1488 aa).

34-41 (GGNGAGKS) contacts ATP. 3 coiled-coil regions span residues 326–418 (LEAD…QYNQ), 444–472 (LDTF…QTAH), and 509–602 (RHLA…QRAP). The segment at 666–783 (PGGAEDQRLN…SLPIFGRAAR (118 aa)) is flexible hinge. Coiled-coil stretches lie at residues 835-923 (EAEI…AKLE), 977-1116 (EMLS…AKAG), and 1209-1265 (VEAI…LQSV). A disordered region spans residues 1049 to 1074 (ADSGAEERARQRRDELHAQLSNNRSR). Residues 1051–1065 (SGAEERARQRRDELH) are compositionally biased toward basic and acidic residues.

The protein belongs to the SMC family. MukB subfamily. Homodimerization via its hinge domain. Binds to DNA via its C-terminal region. Interacts, and probably forms a ternary complex, with MukE and MukF via its C-terminal region. The complex formation is stimulated by calcium or magnesium. Interacts with tubulin-related protein FtsZ.

It is found in the cytoplasm. The protein resides in the nucleoid. Plays a central role in chromosome condensation, segregation and cell cycle progression. Functions as a homodimer, which is essential for chromosome partition. Involved in negative DNA supercoiling in vivo, and by this means organize and compact chromosomes. May achieve or facilitate chromosome segregation by condensation DNA from both sides of a centrally located replisome during cell division. The sequence is that of Chromosome partition protein MukB from Salmonella paratyphi A (strain ATCC 9150 / SARB42).